An 820-amino-acid polypeptide reads, in one-letter code: MVKLYCAVVGVAGSAFSVRVDESDTVDDLKDAIKAKKPNDFKDIDADKLELYVAKRDGVWLTEADVKSGVADITGLVRLEVVRAKLFSVGLSDEVVSEVDAQEEAAGRGPVNVLVVVPMKKRRVDAGVDEERRFFDTRDFPPLLAPPQRGATVESPEAQWEKLLNSLEWKEPKRLCASSGQNWPYQGESELAGHLVEPLALHYTAWYLQNEDKQNHAINLVLSGPGTGKSRMLDQMKGLMCAAAARSNNRKLKERMENAFVFSVTFENGTSATGSLLDRDNPEFDISYRMLYQLSKDRPNWKKFAKTLKSYRSLELDIEAAIGILAKLKGIDDVKKMTVILCVDGLQKLVNDGTKSCDFYRVLASVCSFLNSSRAFAVCVCSATIQSPVDKALSDSPQKRVFLVPPPLRGHEVLPTKTRIEKQLVDDMGGHGRALETLQLFLSHYTKDQLEEMDPTWMFEKVCDALRLQYGDIFASPFFQDPYNCREVLAAILSRRRYKLFDRIGRTDMTVDCLRSFGLFRWGAEGHLECAFILLVLLMQKLPKKLGEVDNFDDHLTRTVLVWQRFEQFVAFYRRVKSIAYCETPVALSSFHAGARFGAIQDIIITEPTSRTVVEALRQEDTKSSSDDSTCFTNRDGGVKISDMDTIVINGASASAGDLFMRVQLKVGRQNVQCNEVIQCKLLQTKQKIHEDAYAKERAKAANESSDVFLLVTPAQATEFDLPPRCGLVSANEFGRYFGPFTSRAYRSFLEPPNINTASFHELRRLEGVGDATAAKIIAERTIRRFSNLEDALNRLVPSKKGKTAMILSRMHYDDDEADL.

An N-terminal signal peptide occupies residues 1–17 (MVKLYCAVVGVAGSAFS). An LQLFLAK domain region spans residues 18–55 (VRVDESDTVDDLKDAIKAKKPNDFKDIDADKLELYVAK). Positions 58–111 (GVWLTEADVKSGVADITGLVRLEVVRAKLFSVGLSDEVVSEVDAQEEAAGRGPV) are DWL domain. The HVLVXXP motif signature appears at 112 to 117 (NVLVVV). A Host nuclear localization signal motif is present at residues 118-124 (PMKKRRV). A C-terminal DC effector domain region spans residues 125 to 820 (DAGVDEERRF…MHYDDDEADL (696 aa)). N268, N371, and N703 each carry an N-linked (GlcNAc...) asparagine glycan. Residues 754–791 (NINTASFHELRRLEGVGDATAAKIIAERTIRRFSNLED) form a hhH DNA-binding domain region.

It belongs to the Crinkler effector family.

The protein localises to the secreted. The protein resides in the host nucleus. Functionally, secreted effector that suppresses plant basal defense and promotes plant susceptibility via targeting promoters of host HSP gene and thus inhibiting their expression. CRN108 binds directly to heat shock elements (HSEs) 5'-GAAnnTTC-3' and interferes with the association of the HSE with the plant heat shock transcription factors, which initializes HSP gene expression in response to stress. In Phytophthora sojae (Soybean stem and root rot agent), this protein is Crinkler effector protein 108.